The following is a 546-amino-acid chain: MTPGEVRRLYFIIRTFLSYGLDELIPKMRITLPLRLWRYSLFWMPNRHKDKPLGERLRLALQELGPVWIKFGQMLSTRRDLFPPHIADQLALLQDKVAPFDGKLAKQQIEAAMGGLPVEAWFDDFEIKPLASASIAQVHTARLKSNGKEVVIKVIRPDILPVIKADLKLIYRLARWVPRLLPDGRRLRPTEVVREYEKTLIDELNLLRESANAIQLRRNFEDSPMLYIPEVYPDYCSEGMMVMERIYGIPVSDVAALEKNGTNMKLLAERGVQVFFTQVFRDSFFHADMHPGNIFVSYEHPENPKYIGIDCGIVGSLNKEDKRYLAENFIAFFNRDYRKVAELHVDSGWVPPDTNVEEFEFAIRTVCEPIFEKPLAEISFGHVLLNLFNTARRFNMEVQPQLVLLQKTLLYVEGVGRQLYPQLDLWKTAKPFLESWIKDQVGIPALVRAFKEKAPFWVEKMPELPELVYDSLRQGKYLQHSVDKIARELQSNHVRQGQSRYFLGIGATLVLSGTFLLVSRPEWGLMPGWLMAGGLIAWFVGWRKTR.

In terms of domain architecture, Protein kinase spans 124 to 502; it reads DFEIKPLASA…HVRQGQSRYF (379 aa). ATP-binding positions include 130–138 and lysine 153; that span reads LASASIAQV. Aspartate 288 serves as the catalytic Proton acceptor. 2 consecutive transmembrane segments (helical) span residues 501–521 and 522–542; these read YFLGIGATLVLSGTFLLVSRP and EWGLMPGWLMAGGLIAWFVGW.

Belongs to the ABC1 family. UbiB subfamily.

Its subcellular location is the cell inner membrane. The protein operates within cofactor biosynthesis; ubiquinone biosynthesis [regulation]. Its function is as follows. Is probably a protein kinase regulator of UbiI activity which is involved in aerobic coenzyme Q (ubiquinone) biosynthesis. In Escherichia coli O127:H6 (strain E2348/69 / EPEC), this protein is Probable protein kinase UbiB.